The sequence spans 380 residues: Alcohol dehydrogenase 1 (380 aa).

Residues C48, T50, H70, C100, C103, C106, C114, and C178 each coordinate Zn(2+). The an alcohol site is built by T50 and H70. T50 is a binding site for NAD(+). Residues 203–208, D227, R232, T273, V296, 296–298, F323, and R373 each bind NAD(+); these read GLGAVG and VGV.

It belongs to the zinc-containing alcohol dehydrogenase family. Homodimer. Homotetramer. It depends on Zn(2+) as a cofactor.

The protein localises to the cytoplasm. It carries out the reaction a primary alcohol + NAD(+) = an aldehyde + NADH + H(+). It catalyses the reaction a secondary alcohol + NAD(+) = a ketone + NADH + H(+). This is Alcohol dehydrogenase 1 (ADH1) from Solanum tuberosum (Potato).